Consider the following 209-residue polypeptide: tRNA (guanine-N(7)-)-methyltransferase (209 aa).

Positions 35, 60, 87, and 113 each coordinate S-adenosyl-L-methionine. Residue aspartate 113 is part of the active site. Substrate contacts are provided by lysine 117 and aspartate 149.

This sequence belongs to the class I-like SAM-binding methyltransferase superfamily. TrmB family.

The enzyme catalyses guanosine(46) in tRNA + S-adenosyl-L-methionine = N(7)-methylguanosine(46) in tRNA + S-adenosyl-L-homocysteine. It functions in the pathway tRNA modification; N(7)-methylguanine-tRNA biosynthesis. In terms of biological role, catalyzes the formation of N(7)-methylguanine at position 46 (m7G46) in tRNA. This chain is tRNA (guanine-N(7)-)-methyltransferase, found in Prochlorococcus marinus (strain MIT 9515).